Here is a 427-residue protein sequence, read N- to C-terminus: Phosphoribosylamine--glycine ligase (427 aa).

The region spanning 107-312 (KDLCARFNIP…LLALVNAAVD (206 aa)) is the ATP-grasp domain. 133 to 193 (IRQQGAPIVV…EEFLDGEEAS (61 aa)) is an ATP binding site. Mg(2+)-binding residues include E282 and N284.

This sequence belongs to the GARS family. Requires Mg(2+) as cofactor. Mn(2+) serves as cofactor.

It carries out the reaction 5-phospho-beta-D-ribosylamine + glycine + ATP = N(1)-(5-phospho-beta-D-ribosyl)glycinamide + ADP + phosphate + H(+). It participates in purine metabolism; IMP biosynthesis via de novo pathway; N(1)-(5-phospho-D-ribosyl)glycinamide from 5-phospho-alpha-D-ribose 1-diphosphate: step 2/2. This Brucella melitensis biotype 1 (strain ATCC 23456 / CCUG 17765 / NCTC 10094 / 16M) protein is Phosphoribosylamine--glycine ligase.